Reading from the N-terminus, the 333-residue chain is 4-hydroxythreonine-4-phosphate dehydrogenase (333 aa).

H133 and T134 together coordinate substrate. The a divalent metal cation site is built by H169, H214, and H269. Substrate-binding residues include K277, N286, and R295.

The protein belongs to the PdxA family. Homodimer. Zn(2+) serves as cofactor. Requires Mg(2+) as cofactor. Co(2+) is required as a cofactor.

It localises to the cytoplasm. It carries out the reaction 4-(phosphooxy)-L-threonine + NAD(+) = 3-amino-2-oxopropyl phosphate + CO2 + NADH. Its pathway is cofactor biosynthesis; pyridoxine 5'-phosphate biosynthesis; pyridoxine 5'-phosphate from D-erythrose 4-phosphate: step 4/5. Functionally, catalyzes the NAD(P)-dependent oxidation of 4-(phosphooxy)-L-threonine (HTP) into 2-amino-3-oxo-4-(phosphooxy)butyric acid which spontaneously decarboxylates to form 3-amino-2-oxopropyl phosphate (AHAP). This is 4-hydroxythreonine-4-phosphate dehydrogenase from Caulobacter vibrioides (strain ATCC 19089 / CIP 103742 / CB 15) (Caulobacter crescentus).